The chain runs to 312 residues: MDIIFYHPTFDTQWWIEALRKAIPQARVRAWKSGDNDSADYALVWHPPVEMLAGRDLKAVFALGAGVDSILSKLQAHPEMLNPSVPLFRLEDTGMGEQMQEYAVSQVLHWFRRFDDYRIQQNSSHWQPLPEYHREDFTIGILGAGVLGSKVAQSLQTWRFPLRCWSRTRKSWPGVQSFAGREELSAFLSQCRVLINLLPNTPETVGIINQQLLEKLPDGAYLLNLARGVHVVEDDLLAALDSGKVKGAMLDVFNREPLPPENPLWQHPRVTITPHVAAITRPAEAVEYISRTIAQLEKGERVCGQVDRARGY.

The active site involves Arg227. His275 functions as the Proton donor in the catalytic mechanism.

It belongs to the D-isomer specific 2-hydroxyacid dehydrogenase family. GhrA subfamily.

The protein resides in the cytoplasm. It carries out the reaction glycolate + NADP(+) = glyoxylate + NADPH + H(+). It catalyses the reaction (R)-glycerate + NAD(+) = 3-hydroxypyruvate + NADH + H(+). The enzyme catalyses (R)-glycerate + NADP(+) = 3-hydroxypyruvate + NADPH + H(+). Its function is as follows. Catalyzes the NADPH-dependent reduction of glyoxylate and hydroxypyruvate into glycolate and glycerate, respectively. The sequence is that of Glyoxylate/hydroxypyruvate reductase A from Escherichia coli (strain 55989 / EAEC).